Reading from the N-terminus, the 374-residue chain is Ribosomal RNA large subunit methyltransferase G (374 aa).

This sequence belongs to the methyltransferase superfamily. RlmG family.

The protein localises to the cytoplasm. It carries out the reaction guanosine(1835) in 23S rRNA + S-adenosyl-L-methionine = N(2)-methylguanosine(1835) in 23S rRNA + S-adenosyl-L-homocysteine + H(+). Functionally, specifically methylates the guanine in position 1835 (m2G1835) of 23S rRNA. This Photobacterium profundum (strain SS9) protein is Ribosomal RNA large subunit methyltransferase G.